Consider the following 833-residue polypeptide: MGGGSNNSHNMDNGKYVRYTPEQVEALERLYNDCPKPSSMRRQQLIRECPILSNIEPKQIKVWFQNRRCREKQRKEASRLQAVNRKLTAMNKLLMEENDRLQKQVSHLVYENSYFRQHPQNQGNLATTDTSCESVVTSGQHHLTPQHQPRDASPAGLLSIADETLTEFISKATGTAVEWVQMPGMKPGPDSIGIVAISHGCTGIAARACGLVGLDPTRVAEILKDKPCWLRDCRSLDIVNVLSTANGGTLELIYMQLYAPTTLAPARDFWMLRYTSVMEDGSLVICERSLNNTQNGPSMPPSPHFVRAEILPSGYLIRPCEGGGSILHIVDHFDLEPWSVPEVLRSLYESSTLLAQRTTMAALRYLRQISQEISQPNVTGWGRRPAALRALSQRLSKGFNEAVNGFSDEGWSILESDGIDDVTLLVNSSPTKMMMTSSLPFANGYTSMPSAVLCAKASMLLQNVPPSILLRFLREHRQEWADNSIDAYSAAAIKAGPCSLPIPRPGSFGGQVILPLAHTIENEEFMEVIKLESLGHYQEDMMMPADIFLLQMCSGVDENAVESCAELIFAPIDASFSDDAPIIPSGFRIIPLDSKSEGLSPNRTLDLASALDVGSRTAGDSCGSRGNSKSVMTIAFQLAFEMHMQENVASMARQYVRSVIASVQRVALALSPSSHQLSGLRPPPASPEAHTLARWISHSYRCYLGVDLLKPHGTDLLKSLWHHPDAVMCCSLKALSPVFTFANQAGLDMLETTLVALQDITLDKIFDNNNGKKTLSSEFPQIMQQGFMCMDGGICMSSMGRAVTYEKAVGWKVLNDDEDPHCICFMFLNWSFI.

Residues 12–75 (DNGKYVRYTP…NRRCREKQRK (64 aa)) constitute a DNA-binding region (homeobox). Positions 70 to 108 (REKQRKEASRLQAVNRKLTAMNKLLMEENDRLQKQVSHL) form a coiled coil. Residues 150–378 (RDASPAGLLS…ISQEISQPNV (229 aa)) form the START domain.

The protein belongs to the HD-ZIP homeobox family. Class III subfamily. In terms of assembly, interacts with ESR1 and ESR2. Interacts with ZPR3.

It localises to the nucleus. Its function is as follows. Probable transcription factor involved in the regulation of vascular development. May promote differentiation of precambial and cambial cells. This chain is Homeobox-leucine zipper protein ATHB-8 (ATHB-8), found in Arabidopsis thaliana (Mouse-ear cress).